The sequence spans 273 residues: Cysteine protease S273R (273 aa).

Residues H168 and N187 contribute to the active site. Residue Q226 coordinates substrate. C232 serves as the catalytic Nucleophile.

The protein belongs to the peptidase C63 family.

It is found in the host cytoplasm. It localises to the virion. Functionally, cysteine protease that plays several role during infection including processing of the structural polyprotein or inhibition of the host immune response. Catalyzes the maturation of the pp220 and pp62 polyprotein precursors into core-shell proteins. Plays a role in the disruption of host pyroptosis via specific cleavage of gasdermin D/GSDMD. In addition, strongly decreases the host cGAS-STING signaling by targeting IKBKE via its enzymatic activity. Also impairs host FOXJ1-mediated antiviral effect via degradation of FOXJ1. The chain is Cysteine protease S273R from African swine fever virus (isolate Tick/Malawi/Lil 20-1/1983) (ASFV).